A 215-amino-acid chain; its full sequence is Endoplasmic reticulum vesicle protein 25 (215 aa).

An N-terminal signal peptide occupies residues methionine 1–glycine 21. Over leucine 22–lysine 184 the chain is Lumenal. The 92-residue stretch at proline 34–serine 125 folds into the GOLD domain. A helical membrane pass occupies residues tryptophan 185–leucine 205. The Cytoplasmic portion of the chain corresponds to arginine 206 to isoleucine 215.

It belongs to the EMP24/GP25L family.

It is found in the endoplasmic reticulum membrane. The protein resides in the golgi apparatus membrane. Functionally, constituent of COPII-coated endoplasmic reticulum-derived transport vesicles. Required for efficient transport of a subset of secretory proteins to the Golgi. Facilitates retrograde transport from the Golgi to the endoplasmic reticulum. The chain is Endoplasmic reticulum vesicle protein 25 (ERV25) from Candida albicans (strain SC5314 / ATCC MYA-2876) (Yeast).